The primary structure comprises 307 residues: Homoserine kinase (307 aa).

91–101 (PLARGLGSSAA) lines the ATP pocket.

The protein belongs to the GHMP kinase family. Homoserine kinase subfamily.

It is found in the cytoplasm. It carries out the reaction L-homoserine + ATP = O-phospho-L-homoserine + ADP + H(+). It functions in the pathway amino-acid biosynthesis; L-threonine biosynthesis; L-threonine from L-aspartate: step 4/5. Catalyzes the ATP-dependent phosphorylation of L-homoserine to L-homoserine phosphate. In Deinococcus radiodurans (strain ATCC 13939 / DSM 20539 / JCM 16871 / CCUG 27074 / LMG 4051 / NBRC 15346 / NCIMB 9279 / VKM B-1422 / R1), this protein is Homoserine kinase.